Reading from the N-terminus, the 397-residue chain is Gamma tubulin complex adapter mto2 (397 aa).

Over residues 1 to 13 (MSEHNYQSDREVA) the composition is skewed to basic and acidic residues. Disordered regions lie at residues 1-44 (MSEH…WRAG), 269-298 (YTSSVDSSPQRMASDSYGRPSLHLNDPFPS), and 346-397 (RSDP…TPSP). Composition is skewed to polar residues over residues 22–37 (ASANQLSSNSRESTPR), 269–281 (YTSSVDSSPQRMA), 352–369 (RHVSNSTNKSSLHPSPTS), and 382–397 (SPASQSFPSLQDTPSP). A phosphoserine mark is found at serine 366 and serine 396.

Interacts with mto1; the interaction is direct and required for efficient binding to the gamma-tubulin complex. Interacts with gamma tubulin complex subunits alp4, alp6 and gtb1.

The protein localises to the cytoplasm. The protein resides in the cytoskeleton. It is found in the microtubule organizing center. It localises to the spindle pole body. In terms of biological role, acts together with mto1 to promote nucleation of at least a subset of cytoplasmic microtubules, by recruiting the gamma-tubulin complex to the interphase microtubule organizing center (iMTOC) and to the equatorial MTOC (eMTOC) during anaphase. Does not appear to be required for cytoplasmic astral microtubule nucleation from the spindle pole body (SPB). Required to establish the eMTOC, and thereby to tether the cytokinetic actin ring. The sequence is that of Gamma tubulin complex adapter mto2 from Schizosaccharomyces pombe (strain 972 / ATCC 24843) (Fission yeast).